We begin with the raw amino-acid sequence, 572 residues long: Proline--tRNA ligase (572 aa).

The protein belongs to the class-II aminoacyl-tRNA synthetase family. ProS type 1 subfamily. In terms of assembly, homodimer.

It localises to the cytoplasm. It catalyses the reaction tRNA(Pro) + L-proline + ATP = L-prolyl-tRNA(Pro) + AMP + diphosphate. Catalyzes the attachment of proline to tRNA(Pro) in a two-step reaction: proline is first activated by ATP to form Pro-AMP and then transferred to the acceptor end of tRNA(Pro). As ProRS can inadvertently accommodate and process non-cognate amino acids such as alanine and cysteine, to avoid such errors it has two additional distinct editing activities against alanine. One activity is designated as 'pretransfer' editing and involves the tRNA(Pro)-independent hydrolysis of activated Ala-AMP. The other activity is designated 'posttransfer' editing and involves deacylation of mischarged Ala-tRNA(Pro). The misacylated Cys-tRNA(Pro) is not edited by ProRS. The sequence is that of Proline--tRNA ligase from Serratia proteamaculans (strain 568).